The chain runs to 313 residues: tRNA dimethylallyltransferase (313 aa).

17–24 (GPTASGKT) contributes to the ATP binding site. Residue 19-24 (TASGKT) coordinates substrate. 3 interaction with substrate tRNA regions span residues 42–45 (DSAL), 166–170 (QRLSR), and 247–252 (RCVGYR).

Belongs to the IPP transferase family. In terms of assembly, monomer. Mg(2+) is required as a cofactor.

The catalysed reaction is adenosine(37) in tRNA + dimethylallyl diphosphate = N(6)-dimethylallyladenosine(37) in tRNA + diphosphate. Catalyzes the transfer of a dimethylallyl group onto the adenine at position 37 in tRNAs that read codons beginning with uridine, leading to the formation of N6-(dimethylallyl)adenosine (i(6)A). This Yersinia pseudotuberculosis serotype O:1b (strain IP 31758) protein is tRNA dimethylallyltransferase.